Here is a 334-residue protein sequence, read N- to C-terminus: Glycerol-3-phosphate dehydrogenase [NAD(P)+] (334 aa).

Positions 14, 15, 35, and 109 each coordinate NADPH. 3 residues coordinate sn-glycerol 3-phosphate: lysine 109, glycine 138, and threonine 140. Alanine 142 lines the NADPH pocket. Sn-glycerol 3-phosphate contacts are provided by lysine 194, aspartate 247, serine 257, arginine 258, and asparagine 259. The active-site Proton acceptor is lysine 194. Arginine 258 contacts NADPH. Valine 282 and glutamate 284 together coordinate NADPH.

The protein belongs to the NAD-dependent glycerol-3-phosphate dehydrogenase family.

The protein localises to the cytoplasm. It catalyses the reaction sn-glycerol 3-phosphate + NAD(+) = dihydroxyacetone phosphate + NADH + H(+). The catalysed reaction is sn-glycerol 3-phosphate + NADP(+) = dihydroxyacetone phosphate + NADPH + H(+). It functions in the pathway membrane lipid metabolism; glycerophospholipid metabolism. Functionally, catalyzes the reduction of the glycolytic intermediate dihydroxyacetone phosphate (DHAP) to sn-glycerol 3-phosphate (G3P), the key precursor for phospholipid synthesis. The chain is Glycerol-3-phosphate dehydrogenase [NAD(P)+] from Psychromonas ingrahamii (strain DSM 17664 / CCUG 51855 / 37).